A 537-amino-acid chain; its full sequence is DEAD-box ATP-dependent RNA helicase 5 (537 aa).

The tract at residues 1 to 97 (MAGQKQELPV…EDLGEGESEQ (97 aa)) is disordered. A coiled-coil region spans residues 22–80 (TNKKKKKSKKNKHTEENHEVEEVPQEVTNGVEEELSNKEKKKKRKREEKESEKNKKKDV). Residues 23 to 33 (NKKKKKSKKNK) are compositionally biased toward basic residues. Basic and acidic residues predominate over residues 68-87 (EEKESEKNKKKDVPEKKLEA). The Q motif motif lies at 116 to 142 (KTFAESNLPENVLDCCKTFEKPSPIQS). In terms of domain architecture, Helicase ATP-binding spans 145 to 324 (WPFLLDGRDL…QEFMDPNPIK (180 aa)). 158–165 (AKTGSGKT) lines the ATP pocket. The DEAD box motif lies at 272 to 275 (DEAD). In terms of domain architecture, Helicase C-terminal spans 349–500 (ARDQRLIALL…VVPADLLKFG (152 aa)). At S533 the chain carries Phosphoserine.

Belongs to the DEAD box helicase family. DDX5/DBP2 subfamily.

The protein localises to the nucleus. The protein resides in the nucleolus. It carries out the reaction ATP + H2O = ADP + phosphate + H(+). ATP-dependent RNA helicase required for 60S ribosomal subunit synthesis. Involved in efficient pre-rRNA processing, predominantly at site A3, which is necessary for the normal formation of 25S and 5.8S rRNAs. This is DEAD-box ATP-dependent RNA helicase 5 (RH5) from Arabidopsis thaliana (Mouse-ear cress).